The primary structure comprises 706 residues: Elongation factor G (706 aa).

The tr-type G domain maps to 12 to 288 (EKTRNIGIMA…GVTNYLPSPN (277 aa)). GTP is bound by residues 21-28 (AHIDAGKT), 85-89 (DTPGH), and 139-142 (NKMD). The interval 288–309 (NDVPAITGHHPQDKEEDITRHP) is disordered. A compositionally biased stretch (basic and acidic residues) spans 297–309 (HPQDKEEDITRHP).

Belongs to the TRAFAC class translation factor GTPase superfamily. Classic translation factor GTPase family. EF-G/EF-2 subfamily.

The protein resides in the cytoplasm. Its function is as follows. Catalyzes the GTP-dependent ribosomal translocation step during translation elongation. During this step, the ribosome changes from the pre-translocational (PRE) to the post-translocational (POST) state as the newly formed A-site-bound peptidyl-tRNA and P-site-bound deacylated tRNA move to the P and E sites, respectively. Catalyzes the coordinated movement of the two tRNA molecules, the mRNA and conformational changes in the ribosome. In Salinibacter ruber (strain DSM 13855 / M31), this protein is Elongation factor G.